Here is a 148-residue protein sequence, read N- to C-terminus: Arginine repressor (148 aa).

It belongs to the ArgR family.

The protein resides in the cytoplasm. It participates in amino-acid biosynthesis; L-arginine biosynthesis [regulation]. Its function is as follows. Regulates arginine biosynthesis genes. In Acidobacterium capsulatum (strain ATCC 51196 / DSM 11244 / BCRC 80197 / JCM 7670 / NBRC 15755 / NCIMB 13165 / 161), this protein is Arginine repressor.